Reading from the N-terminus, the 321-residue chain is tRNA U34 carboxymethyltransferase (321 aa).

Carboxy-S-adenosyl-L-methionine-binding positions include Lys90, Trp104, Lys109, Gly129, Asp151 to Thr153, Ile180 to Glu181, Met195, Tyr199, and Arg314.

Belongs to the class I-like SAM-binding methyltransferase superfamily. CmoB family. As to quaternary structure, homotetramer.

The catalysed reaction is carboxy-S-adenosyl-L-methionine + 5-hydroxyuridine(34) in tRNA = 5-carboxymethoxyuridine(34) in tRNA + S-adenosyl-L-homocysteine + H(+). Its function is as follows. Catalyzes carboxymethyl transfer from carboxy-S-adenosyl-L-methionine (Cx-SAM) to 5-hydroxyuridine (ho5U) to form 5-carboxymethoxyuridine (cmo5U) at position 34 in tRNAs. The sequence is that of tRNA U34 carboxymethyltransferase from Haemophilus influenzae (strain PittEE).